Here is a 95-residue protein sequence, read N- to C-terminus: Cliotide T1 (95 aa).

Positions 1–30 (GIPCGESCVFIPCITGAIGCSCKSKVCYRN) form a cross-link, cyclopeptide (Gly-Asn). Disulfide bonds link Cys4-Cys20, Cys8-Cys22, and Cys13-Cys27. The propeptide at 31–95 (HVIAAEAKTM…KDHLKMSITN (65 aa)) is removed in mature form.

In terms of processing, contains 3 disulfide bonds. This is a cyclic peptide. Expressed in flower, stem, shoot, root, leaf, seed, pod and nodule (at protein level).

Functionally, probably participates in a plant defense mechanism. Active against Gram-negative bacteria E.coli ATCC 700926 (MIC=1.1 uM), K.pneumoniae ATTC 13883 (MIC=2.7 uM) and P.aeruginosa ATCC 39018 (MIC=4.7 uM). Has hemolytic and cytotoxic activity. The protein is Cliotide T1 of Clitoria ternatea (Butterfly pea).